A 486-amino-acid polypeptide reads, in one-letter code: Ribosomal RNA small subunit methyltransferase F (486 aa).

S-adenosyl-L-methionine is bound by residues 122 to 128 (ASAPGSK), E146, D173, and D191. C244 acts as the Nucleophile in catalysis.

It belongs to the class I-like SAM-binding methyltransferase superfamily. RsmB/NOP family.

The protein localises to the cytoplasm. It carries out the reaction cytidine(1407) in 16S rRNA + S-adenosyl-L-methionine = 5-methylcytidine(1407) in 16S rRNA + S-adenosyl-L-homocysteine + H(+). In terms of biological role, specifically methylates the cytosine at position 1407 (m5C1407) of 16S rRNA. This is Ribosomal RNA small subunit methyltransferase F from Shewanella loihica (strain ATCC BAA-1088 / PV-4).